The chain runs to 831 residues: Heat shock 70 kDa protein 14 (831 aa).

2 disordered regions span residues 503-579 (EEVE…KKKV) and 786-831 (TKPK…EGST). The segment covering 509–526 (VTKEHSEETTKMDSDKAS) has biased composition (basic and acidic residues). Residue Ser533 is modified to Phosphoserine.

Belongs to the heat shock protein 70 (TC 1.A.33) family. HSP110/SSE subfamily. In terms of assembly, interacts with HTT1 in both cytoplasm and nucleus. As to expression, constitutively expressed.

The protein localises to the cytoplasm. Its subcellular location is the nucleus. Functionally, in cooperation with other chaperones, Hsp70s are key components that facilitate folding of de novo synthesized proteins, assist translocation of precursor proteins into organelles, and are responsible for degradation of damaged protein under stress conditions. The sequence is that of Heat shock 70 kDa protein 14 (HSP70-14) from Arabidopsis thaliana (Mouse-ear cress).